The sequence spans 236 residues: Purine nucleoside phosphorylase DeoD-type 2 (236 aa).

A purine D-ribonucleoside is bound at residue H5. Phosphate is bound by residues G21, R25, R44, and 88–91; that span reads RVGS. Residues 180 to 182 and 204 to 205 contribute to the a purine D-ribonucleoside site; these read DME and SD. D205 (proton donor) is an active-site residue.

The protein belongs to the PNP/UDP phosphorylase family. Homohexamer; trimer of homodimers.

The enzyme catalyses a purine D-ribonucleoside + phosphate = a purine nucleobase + alpha-D-ribose 1-phosphate. It catalyses the reaction a purine 2'-deoxy-D-ribonucleoside + phosphate = a purine nucleobase + 2-deoxy-alpha-D-ribose 1-phosphate. Catalyzes the reversible phosphorolytic breakdown of the N-glycosidic bond in the beta-(deoxy)ribonucleoside molecules, with the formation of the corresponding free purine bases and pentose-1-phosphate. The sequence is that of Purine nucleoside phosphorylase DeoD-type 2 from Aliivibrio fischeri (strain ATCC 700601 / ES114) (Vibrio fischeri).